We begin with the raw amino-acid sequence, 964 residues long: uncharacterized protein (964 aa).

Disordered regions lie at residues 1–31 (MDSETDTDTHSICNSVSSGENYKSPESSDCE) and 169–199 (EETYSEEDERQTPIQMENATSEVSSSEDEIS). Over residues 10 to 27 (HSICNSVSSGENYKSPES) the composition is skewed to polar residues. Residues 656–840 (EVMESLQVEI…LILNQTSMAK (185 aa)) adopt a coiled-coil conformation.

This is an uncharacterized protein from Caenorhabditis elegans.